The sequence spans 1634 residues: Protein TIC 214 (1634 aa).

The next 5 membrane-spanning stretches (helical) occupy residues 25–45, 53–73, 94–116, 133–153, and 172–192; these read FIIG…YVAL, ILAL…SFFA, HFIL…LITI, FAWF…LVWI, and IFVI…SIQC. 2 disordered regions span residues 216 to 242 and 1365 to 1395; these read RERL…SESE and QQKS…STKS. A compositionally biased stretch (basic and acidic residues) spans 1386–1395; sequence KYLEEDSTKS.

It belongs to the TIC214 family. As to quaternary structure, part of the Tic complex.

The protein localises to the plastid. The protein resides in the chloroplast inner membrane. Functionally, involved in protein precursor import into chloroplasts. May be part of an intermediate translocation complex acting as a protein-conducting channel at the inner envelope. This is Protein TIC 214 from Cuscuta exaltata (Tall dodder).